Consider the following 80-residue polypeptide: Exodeoxyribonuclease 7 small subunit (80 aa).

This sequence belongs to the XseB family. Heterooligomer composed of large and small subunits.

The protein localises to the cytoplasm. It catalyses the reaction Exonucleolytic cleavage in either 5'- to 3'- or 3'- to 5'-direction to yield nucleoside 5'-phosphates.. Its function is as follows. Bidirectionally degrades single-stranded DNA into large acid-insoluble oligonucleotides, which are then degraded further into small acid-soluble oligonucleotides. The protein is Exodeoxyribonuclease 7 small subunit of Oleidesulfovibrio alaskensis (strain ATCC BAA-1058 / DSM 17464 / G20) (Desulfovibrio alaskensis).